We begin with the raw amino-acid sequence, 503 residues long: Major facilitator superfamily domain-containing protein 4A (503 aa).

12 helical membrane passes run 19 to 39 (LTYW…GPTL), 53 to 73 (ITWV…LGGV), 82 to 102 (LFLL…IPFC), 105 to 125 (VGVL…IDTI), 139 to 159 (AIFL…SPLI), 214 to 234 (YAFW…FYLI), 289 to 309 (IWNA…TLFM), 338 to 358 (GYLP…SIPV), 366 to 386 (SMLF…LLSQ), 392 to 412 (MFVG…SMLA), 427 to 447 (VLVT…GSVM), and 455 to 475 (FLVC…VLLV). A disordered region spans residues 484-503 (SEDSACKPPGLDGEATSYQS).

This sequence belongs to the major facilitator superfamily.

It localises to the membrane. The sequence is that of Major facilitator superfamily domain-containing protein 4A (mfsd4a) from Xenopus tropicalis (Western clawed frog).